Here is a 469-residue protein sequence, read N- to C-terminus: NADH-quinone oxidoreductase subunit N (469 aa).

The next 14 membrane-spanning stretches (helical) occupy residues 9–29 (PLLM…LIAG), 40–60 (VGVM…VQMV), 76–96 (ATGV…AVAG), 105–125 (EAET…LAGA), 128–148 (LLLL…LVGL), 162–182 (YLMG…LYGL), 201–221 (VAVA…AGGV), 234–254 (ANAT…LVAL), 265–285 (LAWP…GNLA), 294–316 (RLLG…VAGA), 327–347 (YLGG…ALPG), 365–385 (AAAL…AVFI), 402–422 (LAVV…RWII), and 448–468 (VLAA…WQLV).

The protein belongs to the complex I subunit 2 family. In terms of assembly, NDH-1 is composed of 14 different subunits. Subunits NuoA, H, J, K, L, M, N constitute the membrane sector of the complex.

Its subcellular location is the cell membrane. The catalysed reaction is a quinone + NADH + 5 H(+)(in) = a quinol + NAD(+) + 4 H(+)(out). Functionally, NDH-1 shuttles electrons from NADH, via FMN and iron-sulfur (Fe-S) centers, to quinones in the respiratory chain. The immediate electron acceptor for the enzyme in this species is believed to be a menaquinone. Couples the redox reaction to proton translocation (for every two electrons transferred, four hydrogen ions are translocated across the cytoplasmic membrane), and thus conserves the redox energy in a proton gradient. In Mycobacterium sp. (strain JLS), this protein is NADH-quinone oxidoreductase subunit N.